A 98-amino-acid chain; its full sequence is NADH-ubiquinone oxidoreductase chain 4L (98 aa).

Transmembrane regions (helical) follow at residues 1–21 (MSLTYMNMFMAFTISLLGLLL), 29–49 (SLLCLEGMMLSLFVMMTMTIL), and 61–81 (IILLVFAACEAALGLSLLVMV).

The protein belongs to the complex I subunit 4L family. As to quaternary structure, core subunit of respiratory chain NADH dehydrogenase (Complex I) which is composed of 45 different subunits.

It localises to the mitochondrion inner membrane. The catalysed reaction is a ubiquinone + NADH + 5 H(+)(in) = a ubiquinol + NAD(+) + 4 H(+)(out). Core subunit of the mitochondrial membrane respiratory chain NADH dehydrogenase (Complex I) which catalyzes electron transfer from NADH through the respiratory chain, using ubiquinone as an electron acceptor. Part of the enzyme membrane arm which is embedded in the lipid bilayer and involved in proton translocation. In Vampyrodes caraccioli (Great stripe-faced bat), this protein is NADH-ubiquinone oxidoreductase chain 4L (MT-ND4L).